The following is a 46-amino-acid chain: Diuretic hormone (46 aa).

I46 carries the post-translational modification Isoleucine amide.

It belongs to the sauvagine/corticotropin-releasing factor/urotensin I family.

It localises to the secreted. Functionally, regulation of fluid secretion. Stimulates primary urine secretion by Malpighian tubules and causes a dose-dependent stimulation of cAMP levels in the tubules. This chain is Diuretic hormone, found in Acheta domesticus (House cricket).